The chain runs to 397 residues: Acetate kinase 2 (397 aa).

N10 is a Mg(2+) binding site. K17 lines the ATP pocket. R90 is a substrate binding site. The Proton donor/acceptor role is filled by D147. ATP contacts are provided by residues 207–211 (HLGNG), 281–283 (DCR), and 329–333 (GIGEN). E383 is a binding site for Mg(2+).

The protein belongs to the acetokinase family. In terms of assembly, homodimer. Mg(2+) is required as a cofactor. The cofactor is Mn(2+).

Its subcellular location is the cytoplasm. It carries out the reaction acetate + ATP = acetyl phosphate + ADP. The protein operates within metabolic intermediate biosynthesis; acetyl-CoA biosynthesis; acetyl-CoA from acetate: step 1/2. In terms of biological role, catalyzes the formation of acetyl phosphate from acetate and ATP. Can also catalyze the reverse reaction. This chain is Acetate kinase 2, found in Photobacterium profundum (strain SS9).